The chain runs to 460 residues: 7-cyano-7-deazaguanine synthase 2 (460 aa).

The active-site For GATase activity is C2. The region spanning 2–225 is the Glutamine amidotransferase type-2 domain; it reads CSVTGVLIIK…PYSIVEVNDN (224 aa). 245-255 serves as a coordination point for ATP; the sequence is ASGGLDSTVAA. Zn(2+) contacts are provided by C426, C434, C437, and C440.

It belongs to the QueC family. Zn(2+) serves as cofactor.

It carries out the reaction 7-carboxy-7-deazaguanine + NH4(+) + ATP = 7-cyano-7-deazaguanine + ADP + phosphate + H2O + H(+). It participates in purine metabolism; 7-cyano-7-deazaguanine biosynthesis. In terms of biological role, catalyzes the ATP-dependent conversion of 7-carboxy-7-deazaguanine (CDG) to 7-cyano-7-deazaguanine (preQ(0)). This Sulfurisphaera tokodaii (strain DSM 16993 / JCM 10545 / NBRC 100140 / 7) (Sulfolobus tokodaii) protein is 7-cyano-7-deazaguanine synthase 2 (queC2).